Here is a 400-residue protein sequence, read N- to C-terminus: DNA alpha-glucosyltransferase (400 aa).

As to quaternary structure, interacts with clamp protein gp45.

It catalyses the reaction Transfers an alpha-D-glucosyl residue from UDP-glucose to a hydroxymethylcytosine residue in DNA.. Its pathway is genetic information processing; DNA modification. Its function is as follows. Catalyzes the transfer of glucose from uridine diphosphoglucose to 5-hydroxymethyl cytosine of T4 DNA to yield glucosyl 5-hydroxymethyl cytosine (glc-HMC). This DNA process seems to occur immediately after DNA synthesis since the DNA alpha-glucosyltransferase interacts with the clamp protein gp45. The glc-HMC modification protects the phage genome against its own nucleases and the host restriction endonuclease system. The glc-HMC modification also protects against the host CRISPR-Cas9 defense system. The sequence is that of DNA alpha-glucosyltransferase (agt) from Escherichia coli (Bacteriophage T4).